Consider the following 282-residue polypeptide: ATP phosphoribosyltransferase (282 aa).

The protein belongs to the ATP phosphoribosyltransferase family. Long subfamily. Mg(2+) serves as cofactor.

The protein localises to the cytoplasm. It catalyses the reaction 1-(5-phospho-beta-D-ribosyl)-ATP + diphosphate = 5-phospho-alpha-D-ribose 1-diphosphate + ATP. Its pathway is amino-acid biosynthesis; L-histidine biosynthesis; L-histidine from 5-phospho-alpha-D-ribose 1-diphosphate: step 1/9. With respect to regulation, feedback inhibited by histidine. Catalyzes the condensation of ATP and 5-phosphoribose 1-diphosphate to form N'-(5'-phosphoribosyl)-ATP (PR-ATP). Has a crucial role in the pathway because the rate of histidine biosynthesis seems to be controlled primarily by regulation of HisG enzymatic activity. In Micrococcus luteus (strain ATCC 4698 / DSM 20030 / JCM 1464 / CCM 169 / CCUG 5858 / IAM 1056 / NBRC 3333 / NCIMB 9278 / NCTC 2665 / VKM Ac-2230) (Micrococcus lysodeikticus), this protein is ATP phosphoribosyltransferase.